The chain runs to 200 residues: Systemin (200 aa).

The segment at 1–33 (MGTPSYDIKNKGDDMQEEPKVKLHHEKGGDEKE) is disordered. 2 propeptides span residues 1–178 (MGTP…REDL) and 197–200 (NNKL). Residues 3 to 8 (TPSYDI) form a 1; truncated repeat. The segment covering 8-33 (IKNKGDDMQEEPKVKLHHEKGGDEKE) has biased composition (basic and acidic residues). 4 repeat units span residues 37–45 (EKETPSQDI), 80–88 (EKETISQYI), 117–125 (EKETPSQDI), and 145–153 (DKETPSQDI). 2 disordered regions span residues 106-159 (EEEE…MEGE) and 178-200 (LAVQSKPPSKRDPPKMQTDNNKL). Basic and acidic residues-rich tracts occupy residues 111–140 (EKEKIVEKETPSQDINNKGDDAQEKPKVEH) and 146–158 (KETPSQDIIKMEG).

In terms of tissue distribution, all organs except the roots. Transported out of wounds to distal tissues.

Its subcellular location is the cytoplasm. Activates a lipid-based signal transduction pathway in which linolenic acid is converted to jasmonic acid, a potent activator of defense gene transcription, including proteinase inhibitor. In Solanum lycopersicum (Tomato), this protein is Systemin.